A 108-amino-acid polypeptide reads, in one-letter code: Cell division protein FtsL (108 aa).

At 1-24 the chain is on the cytoplasmic side; the sequence is MSKDTASQPSLTKLIGLDIFGVGR. Residues 25 to 45 form a helical membrane-spanning segment; sequence LHAILLICIFLSAIGVVLATH. At 46 to 108 the chain is on the periplasmic side; sequence NTRQMTVQRE…PDKEVIIKLR (63 aa).

Belongs to the FtsL family. In terms of assembly, part of a complex composed of FtsB, FtsL and FtsQ.

It localises to the cell inner membrane. Essential cell division protein. May link together the upstream cell division proteins, which are predominantly cytoplasmic, with the downstream cell division proteins, which are predominantly periplasmic. This Aliivibrio fischeri (strain ATCC 700601 / ES114) (Vibrio fischeri) protein is Cell division protein FtsL.